Consider the following 366-residue polypeptide: NADH-quinone oxidoreductase subunit D (366 aa).

Belongs to the complex I 49 kDa subunit family. NDH-1 is composed of 14 different subunits. Subunits NuoB, C, D, E, F, and G constitute the peripheral sector of the complex.

It is found in the cell membrane. The enzyme catalyses a quinone + NADH + 5 H(+)(in) = a quinol + NAD(+) + 4 H(+)(out). Its function is as follows. NDH-1 shuttles electrons from NADH, via FMN and iron-sulfur (Fe-S) centers, to quinones in the respiratory chain. The immediate electron acceptor for the enzyme in this species is believed to be a menaquinone. Couples the redox reaction to proton translocation (for every two electrons transferred, four hydrogen ions are translocated across the cytoplasmic membrane), and thus conserves the redox energy in a proton gradient. The chain is NADH-quinone oxidoreductase subunit D from Bacillus cereus (strain ATCC 10987 / NRS 248).